Reading from the N-terminus, the 787-residue chain is Disintegrin and metalloproteinase domain-containing protein 32 (787 aa).

The N-terminal stretch at 1 to 16 (MFRLWLLLAGLCGLLA) is a signal peptide. A Phosphoserine modification is found at S17. The propeptide occupies 17-174 (SRPGFQNSLL…PMDDNIFISE (158 aa)). 2 N-linked (GlcNAc...) asparagine glycosylation sites follow: N39 and N125. Over 175 to 682 (KSEPAVPDLF…ERASGKTENT (508 aa)) the chain is Extracellular. Positions 186–383 (LYLEMHIVVD…VGVKCLQNKP (198 aa)) constitute a Peptidase M12B domain. Intrachain disulfides connect C295-C378, C337-C362, C339-C344, and C450-C471. The Disintegrin domain maps to 391–479 (KPVCGNGRLE…ECGPDITLIN (89 aa)). 2 N-linked (GlcNAc...) asparagine glycosylation sites follow: N465 and N598. Residues 622–654 (SAHVCSQQCSGHGVCDSRNKCHCSPGYKPPNCQ) form the EGF-like domain. 3 disulfide bridges follow: C626/C636, C630/C642, and C644/C653. The helical transmembrane segment at 683–703 (WLLGFLIALPILIVTTAIVLA) threads the bilayer. Residues 704 to 787 (RKQLKKWFAK…DSTQTQSSSN (84 aa)) are Cytoplasmic-facing. Residues 715–787 (EEFPSSESKS…DSTQTQSSSN (73 aa)) are disordered. A compositionally biased stretch (polar residues) spans 728–749 (TQTYASQSSSEGSTQTYASQTR). The segment covering 771–787 (TSRSKSQDSTQTQSSSN) has biased composition (low complexity).

In terms of tissue distribution, testis specific.

It is found in the membrane. In terms of biological role, may play a role in sperm development and fertilization This is a non-catalytic metalloprotease-like protein. The polypeptide is Disintegrin and metalloproteinase domain-containing protein 32 (ADAM32) (Homo sapiens (Human)).